We begin with the raw amino-acid sequence, 167 residues long: Translationally-controlled tumor protein homolog (167 aa).

A TCTP domain is found at 1–167 (MLIFEDVISG…WKHGVKENKI (167 aa)).

This sequence belongs to the TCTP family.

The protein resides in the cytoplasm. It is found in the cytoskeleton. Its function is as follows. Involved in protein synthesis. Involved in microtubule stabilization. The sequence is that of Translationally-controlled tumor protein homolog (TMA19) from Candida albicans (strain SC5314 / ATCC MYA-2876) (Yeast).